The following is a 366-amino-acid chain: Aminomethyltransferase (366 aa).

The protein belongs to the GcvT family. As to quaternary structure, the glycine cleavage system is composed of four proteins: P, T, L and H.

The enzyme catalyses N(6)-[(R)-S(8)-aminomethyldihydrolipoyl]-L-lysyl-[protein] + (6S)-5,6,7,8-tetrahydrofolate = N(6)-[(R)-dihydrolipoyl]-L-lysyl-[protein] + (6R)-5,10-methylene-5,6,7,8-tetrahydrofolate + NH4(+). The glycine cleavage system catalyzes the degradation of glycine. This Bordetella parapertussis (strain 12822 / ATCC BAA-587 / NCTC 13253) protein is Aminomethyltransferase.